Consider the following 538-residue polypeptide: Protein PNS1 (538 aa).

Low complexity predominate over residues 1 to 54 (MGESDAYYNGGQQQQYNGGYQQQYQPQPPAASYQAPPQQPYQQQPYQQGPPQNG). Residues 1-67 (MGESDAYYNG…GNGYMPAQGY (67 aa)) are disordered. At 1–88 (MGESDAYYNG…FKIAKPKYND (88 aa)) the chain is on the cytoplasmic side. Residues 89–109 (LWAGILLILVFAGFVVVSGLA) form a helical membrane-spanning segment. Topologically, residues 110–137 (LQGYSANKGNAGDGIYNNKNDFSPNTST) are extracellular. N-linked (GlcNAc...) asparagine glycosylation occurs at Asn-134. Residues 138 to 158 (VILFMFVLAVAFVLSYAYVWM) form a helical membrane-spanning segment. The Cytoplasmic segment spans residues 159–165 (ARLFPKQ). Residues 166–186 (FIWVTGILNVCWAIGTAIFYL) form a helical membrane-spanning segment. Over 187–191 (WRKYW) the chain is Extracellular. The chain crosses the membrane as a helical span at residues 192–212 (SAGIVFLIFGLFMAFCFWTWI). Residues 213 to 239 (SRIPFSALMLKTTIDVSKKYGHVYLVS) lie on the Cytoplasmic side of the membrane. The helical transmembrane segment at 240 to 260 (LIGGIIATAFSAWYAITLVGI) threads the bilayer. Topologically, residues 261 to 280 (YVKYQPAQDNPSCADGGCGK) are extracellular. Residues 281–301 (GKVIGLIAFITFAMYWFSEWL) traverse the membrane as a helical segment. Over 302 to 335 (KNTIHTTIAGVYGSWYFNPHNFPKDATRASAKRA) the chain is Cytoplasmic. A helical transmembrane segment spans residues 336–356 (LTYSFGSIALGSLLVAIIQFL). Residues 357–372 (RQICNAARNQEGADGS) are Extracellular-facing. A helical transmembrane segment spans residues 373–393 (FVGYAIFCCISCLLGLLEWAV). Over 394-434 (EFINRYAFCHIALYGKAYFAAAKDTWKMIKDRGIDALINDC) the chain is Cytoplasmic. The helical transmembrane segment at 435–455 (LIGPVLSFGALFIAYACALLA) threads the bilayer. The Extracellular segment spans residues 456-474 (YLYLYFTDPAYNSDGQYTA). The chain crosses the membrane as a helical span at residues 475–495 (VVMAFSFLIGFQIANVFTTPI). Topologically, residues 496–538 (SSGIETIFVAAGWDPQVMWRDHPELYNEMVRVYPKVQQVIKDR) are cytoplasmic.

The protein belongs to the CTL (choline transporter-like) family.

The protein localises to the cell membrane. Functionally, probably involved in transport through the plasma membrane. The protein is Protein PNS1 (PNS1) of Gibberella zeae (strain ATCC MYA-4620 / CBS 123657 / FGSC 9075 / NRRL 31084 / PH-1) (Wheat head blight fungus).